We begin with the raw amino-acid sequence, 387 residues long: Alkanesulfonate monooxygenase (387 aa).

It belongs to the SsuD family.

The enzyme catalyses an alkanesulfonate + FMNH2 + O2 = an aldehyde + FMN + sulfite + H2O + 2 H(+). Catalyzes the desulfonation of aliphatic sulfonates. This is Alkanesulfonate monooxygenase from Cupriavidus metallidurans (strain ATCC 43123 / DSM 2839 / NBRC 102507 / CH34) (Ralstonia metallidurans).